Reading from the N-terminus, the 468-residue chain is MEETKVKRTCLERTVCSSKAKEDLISQLPDSLITQILFYLQTKKAVTTSVLSKRWRSLWLSTPGLVLISNDFTDYNAFVSFVDKFLGFSREQKLCLHKLKLSIRKGENDQDCVTRWIDFVATPKLKHLDVEIGPTRCECFEVIPLSLYSCESLLYLRLNHVCLGKFESVSLPCLKTMSLEQNIYANEADLESLISTCPVLEDLSFVSGAYDKVNVLRVQSQTLTSLNIEGCVEYLDLDKSEVLIDATRLKYLNLEADQYESKTIRNSGSLTKVNLLGYFHMKNNDDDDEVDLQKRDMVHNFFTSISGVSDMKISSQAFALFIMNTMPFSPKFCNLSCLEVEIFLPSLETLPTFLESFPNLKSLILGLRYWTPKKELRLSFVPRCLLSSLEFVEIKGCSRSNMERVKYVGEPIETKLARYFVENSTILKKLVLPLRSSTPEEIYSVDFWNFLEFPRRSSICQITYVAGL.

Residues 22–68 (EDLISQLPDSLITQILFYLQTKKAVTTSVLSKRWRSLWLSTPGLVLI) enclose the F-box domain. Positions 375–433 (ELRLSFVPRCLLSSLEFVEIKGCSRSNMERVKYVGEPIETKLARYFVENSTILKKLVLP) constitute an FBD domain.

This Arabidopsis thaliana (Mouse-ear cress) protein is Putative FBD-associated F-box protein At5g22720.